We begin with the raw amino-acid sequence, 383 residues long: MLRSLCSIAVRLGGARQPRLLSSAASGDGNDGKGAKDAIDEDLLNAIEGVANNIHPQNGSEKKSLKNTLINRLVANEKASFDAAAASASSEMLDDQALIGLLADVAGDAKVEKKLPPKSAQLRQEKRGLVLLRKEIFYQAVQSGFTTEEARVKSETIVNEAQIKLQEQRKALLNDVREKVEQEEVEETERSEKDQKLFTMALEFMEKIYKDDLISSAVRKPVKVDNDAIKLFNQKPLGIWKKGEKYEDFSLGFWKQWDERAARISNGSFGPTNSFEEQIEWTTKGKQWEYPIDNEFKMGDESNVSFIDHVFLERHLPSLGIPKSGPIAHFMHLVCVGLSKNPYMTAAKKREHLKWFADYFNTEKQKLVHKLHEQEQIAAQNAL.

The transit peptide at 1–21 directs the protein to the mitochondrion; sequence MLRSLCSIAVRLGGARQPRLL. Residues 158–187 adopt a coiled-coil conformation; that stretch reads VNEAQIKLQEQRKALLNDVREKVEQEEVEE.

This sequence belongs to the mitochondrion-specific ribosomal protein mS31 family. Component of the mitochondrial ribosome small subunit (28S) which comprises a 12S rRNA and about 30 distinct proteins.

It localises to the mitochondrion. The protein is Small ribosomal subunit protein mS31 (mrps-31) of Caenorhabditis elegans.